The chain runs to 223 residues: Deoxyribose-phosphate aldolase (223 aa).

Asp89 functions as the Proton donor/acceptor in the catalytic mechanism. The active-site Schiff-base intermediate with acetaldehyde is the Lys152. Lys181 acts as the Proton donor/acceptor in catalysis.

The protein belongs to the DeoC/FbaB aldolase family. DeoC type 1 subfamily.

The protein resides in the cytoplasm. The catalysed reaction is 2-deoxy-D-ribose 5-phosphate = D-glyceraldehyde 3-phosphate + acetaldehyde. Its pathway is carbohydrate degradation; 2-deoxy-D-ribose 1-phosphate degradation; D-glyceraldehyde 3-phosphate and acetaldehyde from 2-deoxy-alpha-D-ribose 1-phosphate: step 2/2. Functionally, catalyzes a reversible aldol reaction between acetaldehyde and D-glyceraldehyde 3-phosphate to generate 2-deoxy-D-ribose 5-phosphate. This Listeria monocytogenes serotype 4a (strain HCC23) protein is Deoxyribose-phosphate aldolase.